A 190-amino-acid polypeptide reads, in one-letter code: Orotate phosphoribosyltransferase (190 aa).

Residue 114–122 coordinates 5-phospho-alpha-D-ribose 1-diphosphate; the sequence is EDVVTTGGS. Orotate contacts are provided by threonine 118 and arginine 146.

Belongs to the purine/pyrimidine phosphoribosyltransferase family. PyrE subfamily. In terms of assembly, homodimer. The cofactor is Mg(2+).

It carries out the reaction orotidine 5'-phosphate + diphosphate = orotate + 5-phospho-alpha-D-ribose 1-diphosphate. It functions in the pathway pyrimidine metabolism; UMP biosynthesis via de novo pathway; UMP from orotate: step 1/2. Its function is as follows. Catalyzes the transfer of a ribosyl phosphate group from 5-phosphoribose 1-diphosphate to orotate, leading to the formation of orotidine monophosphate (OMP). This chain is Orotate phosphoribosyltransferase, found in Caldanaerobacter subterraneus subsp. tengcongensis (strain DSM 15242 / JCM 11007 / NBRC 100824 / MB4) (Thermoanaerobacter tengcongensis).